The primary structure comprises 506 residues: Voltage-gated potassium channel regulatory subunit KCNG4 (506 aa).

Residues 1 to 216 lie on the Cytoplasmic side of the membrane; sequence MPMSSRDRDL…EMVEDPQSGL (216 aa). The chain crosses the membrane as a helical span at residues 217–238; the sequence is PGKVFACLSVLFVATTAVSLCV. At 239–259 the chain is on the extracellular side; sequence STMPDFRAEEGKGECTRKCYY. Residues 260 to 281 traverse the membrane as a helical segment; sequence IFVVESICVAWFSLEFCLRFVQ. The Cytoplasmic portion of the chain corresponds to 282–292; that stretch reads APNKCQFFRGP. Residues 293 to 312 form a helical membrane-spanning segment; that stretch reads LNVIDILAISPYYVSLAVSD. Residues 313–326 lie on the Extracellular side of the membrane; sequence ESPEAGERPSSSSY. A helical; Voltage-sensor membrane pass occupies residues 327–351; sequence LEKVGLVLRVLRALRILYVMRLARH. At 352–366 the chain is on the cytoplasmic side; it reads SLGLQTLGLTVRRCA. A helical transmembrane segment spans residues 367–388; sequence REFGLLMLFLAVAVTLFSPLVY. Topologically, residues 389 to 403 are extracellular; that stretch reads VAENESGRVLEFTSI. An intramembrane region (helical) is located at residues 404 to 415; the sequence is PASYWWAIISMT. Positions 416–421 match the Selectivity filter motif; that stretch reads TVGYGD. Residues 416–423 lie within the membrane without spanning it; that stretch reads TVGYGDMV. Topologically, residues 424–430 are extracellular; that stretch reads PRSVPGQ. Residues 431–459 form a helical membrane-spanning segment; the sequence is MVALSSILSGILIMAFPATSIFHTFSHSY. At 460-506 the chain is on the cytoplasmic side; sequence LELKREQEQVQARLRRLQNTNSASERELLSDVDDLVPEGLTSPGRYM.

The protein belongs to the potassium channel family. G (TC 1.A.1.2) subfamily. Kv6.4/KCNG4 sub-subfamily. As to quaternary structure, heterotetramer with KCNB1. Does not form homomultimer.

The protein localises to the cell membrane. Its function is as follows. Regulatory subunit of the voltage-gated potassium (Kv) channel which, when coassembled with KCNB1, modulates the kinetics parameters of the heterotetrameric channel namely the time course of activation, deactivation and inactivation and on the voltage-dependence of activation. Potassium channel subunit that does not form functional channels by itself. Reduces the deactivation rate. Modulates the threshold for activation by shifting by approximately 20 mV in hyperpolarizing direction. Markedly changes the inactivation by shifting the voltage dependence of inactivation by approximately 40 mV in hyperpolarizing direction. Acceleratee activation and enhances the time course of activation. This chain is Voltage-gated potassium channel regulatory subunit KCNG4, found in Mus musculus (Mouse).